We begin with the raw amino-acid sequence, 435 residues long: ATP-dependent protease ATPase subunit HslU (435 aa).

ATP is bound by residues Ile18, Gly60–Glu65, Asp248, Glu313, and Arg385.

It belongs to the ClpX chaperone family. HslU subfamily. As to quaternary structure, a double ring-shaped homohexamer of HslV is capped on each side by a ring-shaped HslU homohexamer. The assembly of the HslU/HslV complex is dependent on binding of ATP.

Its subcellular location is the cytoplasm. ATPase subunit of a proteasome-like degradation complex; this subunit has chaperone activity. The binding of ATP and its subsequent hydrolysis by HslU are essential for unfolding of protein substrates subsequently hydrolyzed by HslV. HslU recognizes the N-terminal part of its protein substrates and unfolds these before they are guided to HslV for hydrolysis. This Sinorhizobium medicae (strain WSM419) (Ensifer medicae) protein is ATP-dependent protease ATPase subunit HslU.